The following is a 314-amino-acid chain: MLQVIFLGSGGIMPTRERNVPAIALRYKGEIILFDVGEGTIRQMNSAKLSPMRVEKIFITHFHGDHYLGLGGLIQTMNLWNREKPLHIYGPKYTFEFVQNFLNSGFFRPGFEVHVHELGETRLKFKDYEIWSFKVEHGIPALGYVFKEKDKRGKFLPEKLAQYGLRPGPILGKLEKDGKIEWNGQVIRLEDVTGPRRRGVKVVYTGDTEPCERVRLFAERADLLIHDATYLSDGDRGDSYHSTVEEACETARRAKVKLLALFHRAFRYTYDEYLSGASKICQETGVNFVIPRDFDVLTYKSGEWKRENLLEEGK.

Zn(2+)-binding residues include His61, His63, Asp65, His66, His137, Asp207, and His263. The Proton acceptor role is filled by Asp65.

The protein belongs to the RNase Z family. In terms of assembly, homodimer. Zn(2+) serves as cofactor.

It catalyses the reaction Endonucleolytic cleavage of RNA, removing extra 3' nucleotides from tRNA precursor, generating 3' termini of tRNAs. A 3'-hydroxy group is left at the tRNA terminus and a 5'-phosphoryl group is left at the trailer molecule.. In terms of biological role, zinc phosphodiesterase, which displays some tRNA 3'-processing endonuclease activity. Probably involved in tRNA maturation, by removing a 3'-trailer from precursor tRNA. The chain is Ribonuclease Z from Thermococcus gammatolerans (strain DSM 15229 / JCM 11827 / EJ3).